Here is a 173-residue protein sequence, read N- to C-terminus: Alpha-crystallin A chain (173 aa).

Position 1 is an N-acetylmethionine (M1). Positions 1–63 (MDIAIQHPWF…RTVLDSGISE (63 aa)) are required for complex formation with BFSP1 and BFSP2. Q6 is modified (deamidated glutamine; partial). S45 carries the phosphoserine modification. Position 50 is a deamidated glutamine; partial (Q50). Positions 52-162 (LFRTVLDSGI…GHSERAIPVS (111 aa)) constitute a sHSP domain. Position 70 is an N6-acetyllysine (K70). The residue at position 90 (Q90) is a Deamidated glutamine; partial. N6-acetyllysine is present on K99. Position 100 (H100) interacts with Zn(2+). The residue at position 101 (N101) is a Deamidated asparagine; partial. Zn(2+) contacts are provided by E102 and H107. S122 carries the post-translational modification Phosphoserine. N123 carries the post-translational modification Deamidated asparagine; partial. The tract at residues 144–173 (PKIPSGMDAGHSERAIPVSREEKPGSAPSS) is disordered. The segment covering 153-167 (GHSERAIPVSREEKP) has biased composition (basic and acidic residues). Position 154 (H154) interacts with Zn(2+). S162 carries an O-linked (GlcNAc) serine glycan.

It belongs to the small heat shock protein (HSP20) family. As to quaternary structure, heteromer composed of three CRYAA and one CRYAB subunits. Inter-subunit bridging via zinc ions enhances stability, which is crucial as there is no protein turn over in the lens. Can also form homodimers and homotetramers (dimers of dimers) which serve as the building blocks of homooligomers. Within homooligomers, the zinc-binding motif is created from residues of 3 different molecules. His-100 and Glu-102 from one molecule are ligands of the zinc ion, and His-107 and His-154 residues from additional molecules complete the site with tetrahedral coordination geometry. Part of a complex required for lens intermediate filament formation composed of BFSP1, BFSP2 and CRYAA. Post-translationally, acetylation at Lys-70 may increase chaperone activity. Undergoes age-dependent proteolytical cleavage at the C-terminus.

Its subcellular location is the cytoplasm. The protein localises to the nucleus. Contributes to the transparency and refractive index of the lens. Acts as a chaperone, preventing aggregation of various proteins under a wide range of stress conditions. Required for the correct formation of lens intermediate filaments as part of a complex composed of BFSP1, BFSP2 and CRYAA. The chain is Alpha-crystallin A chain (CRYAA) from Equus caballus (Horse).